A 327-amino-acid chain; its full sequence is Flotillin-like protein FloA (327 aa).

Residues 2-22 (IGLIIIVVIVLVALLLLFSFV) traverse the membrane as a helical segment. Residues 305–327 (ADTGMRNSINQRTNQKDDESPDK) are disordered. Residues 318 to 327 (NQKDDESPDK) show a composition bias toward basic and acidic residues.

Belongs to the flotillin-like FloA family. In terms of assembly, homooligomerizes.

Its subcellular location is the cell membrane. The protein resides in the membrane raft. Found in functional membrane microdomains (FMM) that may be equivalent to eukaryotic membrane rafts. FMMs are highly dynamic and increase in number as cells age. Flotillins are thought to be important factors in membrane fluidity. The chain is Flotillin-like protein FloA from Staphylococcus saprophyticus subsp. saprophyticus (strain ATCC 15305 / DSM 20229 / NCIMB 8711 / NCTC 7292 / S-41).